Here is a 309-residue protein sequence, read N- to C-terminus: Tyrosine recombinase XerD (309 aa).

In terms of domain architecture, Core-binding (CB) spans 3–88; sequence MRASLAIENF…ALRQFFRFLY (86 aa). In terms of domain architecture, Tyr recombinase spans 109–302; sequence PLPKIMSVEN…LEERLHKLVS (194 aa). Residues R158, K182, H254, R257, and H280 contribute to the active site. Y289 acts as the O-(3'-phospho-DNA)-tyrosine intermediate in catalysis.

This sequence belongs to the 'phage' integrase family. XerD subfamily. Forms a cyclic heterotetrameric complex composed of two molecules of XerC and two molecules of XerD.

It localises to the cytoplasm. Functionally, site-specific tyrosine recombinase, which acts by catalyzing the cutting and rejoining of the recombining DNA molecules. The XerC-XerD complex is essential to convert dimers of the bacterial chromosome into monomers to permit their segregation at cell division. It also contributes to the segregational stability of plasmids. In Brucella melitensis biotype 1 (strain ATCC 23456 / CCUG 17765 / NCTC 10094 / 16M), this protein is Tyrosine recombinase XerD.